A 548-amino-acid chain; its full sequence is MKNVNPTHTLAWKALEDHFAVMKDTEMKTLFSQDPSRFNTFSRTFSDQILVDFSKNRITQETLDKLQALAKECDVAGAIKSMFSGEKINCTEDRAVLHTALRNRSNTPVMVDGKDVMPEVNAVLHKMKVFSERVISGEWKGYTGKAITDVVNIGIGGSDLGPYMVTEALRPYKNHLTMHFVSNVDGTHIAETLKKCDPETTLFLIASKTFTTQETMTNAHSARDWFLSAAKESAFVAKHFVALSTNSAEVEKFGIDTANMFEFWDWVGGRYSLWSAIGLSIVLSIGYDNFEQLLSGAHAMDNHFRTTEAENNIPMILALIGIWYNNFFGTETEAILPYDQYMHRFAAYFQQGNMESNGKYIDRDGNKVSYQTGPIIWGEPGTNGQHAFYQLIHQGTKLIPCDFIAPAISHNPLSDHHAKLMSNFFAQTEALAFGKTREQVDAEFASAGKDPATMGYVAPFKVFEGNRPTNSILLKEITPYSLGALIAMYEHKIFVQGVIFNIFTFDQWGVELGKQLANRILPELKGKESVNSHDSSTNNLINRYKAWR.

The Proton donor role is filled by Glu355. Active-site residues include His386 and Lys514.

This sequence belongs to the GPI family.

It localises to the cytoplasm. The enzyme catalyses alpha-D-glucose 6-phosphate = beta-D-fructose 6-phosphate. Its pathway is carbohydrate biosynthesis; gluconeogenesis. It functions in the pathway carbohydrate degradation; glycolysis; D-glyceraldehyde 3-phosphate and glycerone phosphate from D-glucose: step 2/4. Its function is as follows. Catalyzes the reversible isomerization of glucose-6-phosphate to fructose-6-phosphate. This Proteus mirabilis (strain HI4320) protein is Glucose-6-phosphate isomerase.